We begin with the raw amino-acid sequence, 518 residues long: Arrestin-related trafficking adapter 10 (518 aa).

Lysine 118 participates in a covalent cross-link: Glycyl lysine isopeptide (Lys-Gly) (interchain with G-Cter in ubiquitin).

It belongs to the ART10 family. In terms of assembly, interacts with RSP5. Post-translationally, ubiquitinated by RSP5.

The protein resides in the cytoplasm. In terms of biological role, may regulate endocytosis by recruiting RSP5 ubiquitin ligase activity to specific plasma membrane proteins in response to extracellular stimuli. This Saccharomyces cerevisiae (strain ATCC 204508 / S288c) (Baker's yeast) protein is Arrestin-related trafficking adapter 10 (ART10).